Reading from the N-terminus, the 576-residue chain is Proline--tRNA ligase (576 aa).

Belongs to the class-II aminoacyl-tRNA synthetase family. ProS type 1 subfamily. In terms of assembly, homodimer.

The protein localises to the cytoplasm. The catalysed reaction is tRNA(Pro) + L-proline + ATP = L-prolyl-tRNA(Pro) + AMP + diphosphate. Its function is as follows. Catalyzes the attachment of proline to tRNA(Pro) in a two-step reaction: proline is first activated by ATP to form Pro-AMP and then transferred to the acceptor end of tRNA(Pro). As ProRS can inadvertently accommodate and process non-cognate amino acids such as alanine and cysteine, to avoid such errors it has two additional distinct editing activities against alanine. One activity is designated as 'pretransfer' editing and involves the tRNA(Pro)-independent hydrolysis of activated Ala-AMP. The other activity is designated 'posttransfer' editing and involves deacylation of mischarged Ala-tRNA(Pro). The misacylated Cys-tRNA(Pro) is not edited by ProRS. The polypeptide is Proline--tRNA ligase (Psychrobacter sp. (strain PRwf-1)).